Here is a 117-residue protein sequence, read N- to C-terminus: Small ribosomal subunit protein uS12c (117 aa).

A disordered region spans residues 9 to 40; the sequence is RNARQPIENRKKSPALRGCPQRRGTITPKKPN.

It belongs to the universal ribosomal protein uS12 family. As to quaternary structure, part of the 30S ribosomal subunit.

The protein localises to the plastid. It localises to the chloroplast. Functionally, with S4 and S5 plays an important role in translational accuracy. Located at the interface of the 30S and 50S subunits. This chain is Small ribosomal subunit protein uS12c (rps12), found in Pinus koraiensis (Korean pine).